Here is a 163-residue protein sequence, read N- to C-terminus: ATP synthase subunit b 1 (163 aa).

A helical transmembrane segment spans residues 5-25 (FDATFFAFVGLVLFLALVVYL).

It belongs to the ATPase B chain family. In terms of assembly, F-type ATPases have 2 components, F(1) - the catalytic core - and F(0) - the membrane proton channel. F(1) has five subunits: alpha(3), beta(3), gamma(1), delta(1), epsilon(1). F(0) has three main subunits: a(1), b(2) and c(10-14). The alpha and beta chains form an alternating ring which encloses part of the gamma chain. F(1) is attached to F(0) by a central stalk formed by the gamma and epsilon chains, while a peripheral stalk is formed by the delta and b chains.

Its subcellular location is the cell inner membrane. F(1)F(0) ATP synthase produces ATP from ADP in the presence of a proton or sodium gradient. F-type ATPases consist of two structural domains, F(1) containing the extramembraneous catalytic core and F(0) containing the membrane proton channel, linked together by a central stalk and a peripheral stalk. During catalysis, ATP synthesis in the catalytic domain of F(1) is coupled via a rotary mechanism of the central stalk subunits to proton translocation. Its function is as follows. Component of the F(0) channel, it forms part of the peripheral stalk, linking F(1) to F(0). The sequence is that of ATP synthase subunit b 1 from Rhizobium leguminosarum bv. trifolii (strain WSM2304).